The following is a 217-amino-acid chain: Protein-L-isoaspartate O-methyltransferase (217 aa).

The active site involves Ser64.

The protein belongs to the methyltransferase superfamily. L-isoaspartyl/D-aspartyl protein methyltransferase family.

Its subcellular location is the cytoplasm. The catalysed reaction is [protein]-L-isoaspartate + S-adenosyl-L-methionine = [protein]-L-isoaspartate alpha-methyl ester + S-adenosyl-L-homocysteine. Its function is as follows. Catalyzes the methyl esterification of L-isoaspartyl residues in peptides and proteins that result from spontaneous decomposition of normal L-aspartyl and L-asparaginyl residues. It plays a role in the repair and/or degradation of damaged proteins. The chain is Protein-L-isoaspartate O-methyltransferase from Rhodopseudomonas palustris (strain BisB5).